The following is a 296-amino-acid chain: Glycine--tRNA ligase alpha subunit (296 aa).

The protein belongs to the class-II aminoacyl-tRNA synthetase family. In terms of assembly, tetramer of two alpha and two beta subunits.

The protein localises to the cytoplasm. It catalyses the reaction tRNA(Gly) + glycine + ATP = glycyl-tRNA(Gly) + AMP + diphosphate. The polypeptide is Glycine--tRNA ligase alpha subunit (Listeria welshimeri serovar 6b (strain ATCC 35897 / DSM 20650 / CCUG 15529 / CIP 8149 / NCTC 11857 / SLCC 5334 / V8)).